Consider the following 1023-residue polypeptide: Sodium/potassium-transporting ATPase subunit alpha-1 (1023 aa).

The propeptide occupies 1–5 (MGYGA). A compositionally biased stretch (basic and acidic residues) spans 1–11 (MGYGAGRDKYE). Positions 1–34 (MGYGAGRDKYEPAATSEHGGKKGKGKGKDRDMEE) are disordered. Topologically, residues 6–87 (GRDKYEPAAT…NALTPPPTTP (82 aa)) are cytoplasmic. Thr-15 carries the phosphothreonine; by PKC modification. Ser-16 carries the phosphoserine; by PKC modification. An interaction with phosphoinositide-3 kinase region spans residues 82-84 (PPP). A helical membrane pass occupies residues 88–108 (EWVKFCRQLFGGFSMLLWIGA). Residues 109–131 (ILCFLAYGIRKASDLEPDNDNLY) are Extracellular-facing. Residues 132–152 (LGVVLSAVVIITGCFSYYQEA) form a helical membrane-spanning segment. Topologically, residues 153 to 288 (KSSRIMESFK…GGQTPIAVEI (136 aa)) are cytoplasmic. The interval 215–235 (NSSLTGESEPQTRSPDFTNEN) is disordered. A helical transmembrane segment spans residues 289-308 (GHFIHIITGVAVFLGVSFFI). Over 309–320 (LSLILHYTWLEA) the chain is Extracellular. The helical transmembrane segment at 321–338 (VIFLIGIIVANVPEGLLA) threads the bilayer. Over 339 to 772 (TVTVCLTLTA…EEGRLIFDNL (434 aa)) the chain is Cytoplasmic. The active-site 4-aspartylphosphate intermediate is Asp-376. ATP is bound at residue Lys-487. Mg(2+) is bound by residues Asp-717 and Asp-721. Residues 773–792 (KKSIAYTLTSNIPEITPFLI) traverse the membrane as a helical segment. Over 793–802 (FIIADIPLPL) the chain is Extracellular. A helical membrane pass occupies residues 803–823 (GTVTILCIDLGTDMVPAISLA). The Cytoplasmic portion of the chain corresponds to 824–843 (YEQAESDIMKRQPRNPKKDK). Residues 844 to 866 (LVNERLISMAYGQIGMIQALGGF) form a helical membrane-spanning segment. Over 867 to 918 (FAYFVILAENGFLPSTLLGIRVAWEDRYVNDVEDSYGQQWTYEQRKIVEFTC) the chain is Extracellular. A helical membrane pass occupies residues 919-938 (HTAFFVSIVVVQWADLIICK). Residues 939-951 (TRRNSVFQQGMKN) are Cytoplasmic-facing. Ser-943 is subject to Phosphoserine; by PKA. The chain crosses the membrane as a helical span at residues 952–970 (KILIFGLFEETALAAFLSY). Residues 971–985 (CPGMDVALRMYPLKP) lie on the Extracellular side of the membrane. Residues 986–1006 (TWWFCAFPYSLLIFIYDEVRK) traverse the membrane as a helical segment. Over 1007–1023 (LILRRSPGGWVEKETYY) the chain is Cytoplasmic.

This sequence belongs to the cation transport ATPase (P-type) (TC 3.A.3) family. Type IIC subfamily. In terms of assembly, the sodium/potassium-transporting ATPase is composed of a catalytic alpha subunit, an auxiliary non-catalytic beta subunit and an additional regulatory subunit. In terms of tissue distribution, mainly expressed in kidney. Found in bladder, colon, eye, and testis. Found in low levels in brain, heart, spleen and liver.

It is found in the cell membrane. The protein resides in the sarcolemma. The catalysed reaction is K(+)(out) + Na(+)(in) + ATP + H2O = K(+)(in) + Na(+)(out) + ADP + phosphate + H(+). Its activity is regulated as follows. This alpha subunit is resistant to ouabain. This is the catalytic component of the active enzyme, which catalyzes the hydrolysis of ATP coupled with the exchange of sodium and potassium ions across the plasma membrane. This action creates the electrochemical gradient of sodium and potassium ions, providing the energy for active transport of various nutrients. The chain is Sodium/potassium-transporting ATPase subunit alpha-1 (ATP1A1) from Rhinella marina (Cane toad).